Here is a 1504-residue protein sequence, read N- to C-terminus: MSRESNDTIQSDTVRSSSKSDYFRIQLNNQDYYMSKPTFLDPSHGESLPLNQFSQVPNIRVFGALPTGHQVLCHVHGILPYMFIKYDGQITDTSTLRHQRCAQVHKTLEVKIRASFKRKKDDKHDLAGDKLGNLNFVADVSVVKGIPFYGYHVGWNLFYKISLLNPSCLSRISELIRDGKIFGKKFEIYESHIPYLLQWTADFNLFGCSWINVDRCYFRSPVLNSILDIDKLTINDDLQLLLDRFCDFKCNVLSRRDFPRVGNGLIEIDILPQFIKNREKLQHRDIHHDFLEKLGDISDIPVKPYVSSARDMINELTMQREELSLKEYKEPPETKRHVSGHQWQSSGEFEAFYKKAQHKTSTFDGQIPNFENFIDKNQKFSAINTPYEALPQLWPRLPQIEINNNSMQDKKNDDQVNASFTEYEICGVDNENEGVKGSNIKSRSYSWLPESIASPKDSTILLDHQTKYHNTINFSMDCAMTQNMASKRKLRSSVSANKTSLLSRKRKKVMAAGLRYGKRAFVYGEPPFGYQDILNKLEDEGFPKIDYKDPFFSNPVDLENKPYAYAGKRFEISSTHVSTRIPVQFGGETVSVYNKPTFDMFSSWKYALKPPTYDAVQKWYNKVPSMGNKKTESQISMHTPHSKFLYKFASDVSGKQKRKKSSVHDSLTHLTLEIHANTRSDKIPDPAIDEVSMIIWCLEEETFPLDLDIAYEGIMIVHKASEDSTFPTKIQHCINEIPVMFYESEFEMFEALTDLVLLLDPDILSGFEIHNFSWGYIIERCQKIHQFDIVRELARVKCQIKTKLSDTWGYAHSSGIMITGRHMINIWRALRSDVNLTQYTIESAAFNILHKRLPHFSFESLTNMWNAKKSTTELKTVLNYWLSRAQINIQLLRKQDYIARNIEQARLIGIDFHSVYYRGSQFKVESFLIRICKSESFILLSPGKKDVRKQKALECVPLVMEPESAFYKSPLIVLDFQSLYPSIMIGYNYCYSTMIGRVREINLTENNLGVSKFSLPRNILALLKNDVTIAPNGVVYAKTSVRKSTLSKMLTDILDVRVMIKKTMNEIGDDNTTLKRLLNNKQLALKLLANVTYGYTSASFSGRMPCSDLADSIVQTGRETLEKAIDIIEKDETWNAKVVYGDTDSLFVYLPGKTAIEAFSIGHAMAERVTQNNPKPIFLKFEKVYHPSILISKKRYVGFSYESPSQTLPIFDAKGIETVRRDGIPAQQKIIEKCIRLLFQTKDLSKIKKYLQNEFFKIQIGKVSAQDFCFAKEVKLGAYKSEKTAPAGAVVVKRRINEDHRAEPQYKERIPYLVVKGKQGQLLRERCVSPEEFLEGENLELDSEYYINKILIPPLDRLFNLIGINVGNWAQEIVKSKRASTTTTKVENITRVGTSATCCNCGEELTKICSLQLCDDCLEKRSTTTLSFLIKKLKRQKEYQTLKTVCRTCSYRYTSDAGIENDHIASKCNSYDCPVFYSRVKAERYLRDNQSVQREEALISLNDW.

The Zn(2+) site is built by cysteine 1398, cysteine 1401, cysteine 1414, and cysteine 1417. A CysA-type zinc finger spans residues cysteine 1398–cysteine 1417. [4Fe-4S] cluster contacts are provided by cysteine 1446, cysteine 1449, cysteine 1468, and cysteine 1473. A CysB motif motif is present at residues cysteine 1446–cysteine 1473.

This sequence belongs to the DNA polymerase type-B family. Forms DNA polymerase zeta with REV7. Requires [4Fe-4S] cluster as cofactor.

It is found in the mitochondrion. It localises to the nucleus. The catalysed reaction is DNA(n) + a 2'-deoxyribonucleoside 5'-triphosphate = DNA(n+1) + diphosphate. Its function is as follows. Nonessential DNA polymerase. Required for DNA damage induced mutagenesis. Involved in DNA repair, mitochondrial DNA repair and translesion synthesis. Translesion synthesis in S.cerevisiae may use a specialized DNA polymerase that is not required for other DNA replicative processes. Has a role in the bypass of abasic (AP) sites. Highly inefficient in incorporating nucleotides opposite the AP site, but efficiently extends from nucleotides, particularly an A, inserted opposite the lesion. The polypeptide is DNA polymerase zeta catalytic subunit (REV3) (Saccharomyces cerevisiae (strain ATCC 204508 / S288c) (Baker's yeast)).